A 400-amino-acid chain; its full sequence is Phosphoglycerate kinase (400 aa).

Substrate-binding positions include 23–25 (DLN), Arg-38, 61–64 (HFGR), Arg-120, and Arg-153. ATP-binding positions include Lys-203, Glu-325, and 355 to 358 (GGDT).

The protein belongs to the phosphoglycerate kinase family. Monomer.

It is found in the cytoplasm. The enzyme catalyses (2R)-3-phosphoglycerate + ATP = (2R)-3-phospho-glyceroyl phosphate + ADP. It participates in carbohydrate degradation; glycolysis; pyruvate from D-glyceraldehyde 3-phosphate: step 2/5. The protein is Phosphoglycerate kinase of Agrobacterium fabrum (strain C58 / ATCC 33970) (Agrobacterium tumefaciens (strain C58)).